The sequence spans 80 residues: Large ribosomal subunit protein bL31B (80 aa).

Belongs to the bacterial ribosomal protein bL31 family. Type B subfamily. As to quaternary structure, part of the 50S ribosomal subunit.

This chain is Large ribosomal subunit protein bL31B, found in Streptococcus thermophilus (strain CNRZ 1066).